The primary structure comprises 58 residues: Arabinogalactan protein 21 (58 aa).

Positions 1 to 24 (MEAMKMKMMVFIMVVAVAFSAATA) are cleaved as a signal peptide. A 4-hydroxyproline mark is found at P30, P32, and P34. Residues P30, P32, and P34 are each glycosylated (O-linked (Ara...) hydroxyproline). Residue S36 is the site of GPI-anchor amidated serine attachment. The propeptide at 37-58 (DAAMFVPALFASVVALASGFIF) is removed in mature form.

Belongs to the AG-peptide AGP family. In terms of processing, contains 4-hydroxyproline; hydroxylated on Pro-30, Pro-32 and Pro-34. O-glycosylated on hydroxyprolines; noncontiguous hydroxylproline residues are glycosylated with arabinogalactan.

It is found in the cell membrane. Proteoglycan that seems to be implicated in diverse developmental roles such as differentiation, cell-cell recognition, embryogenesis and programmed cell death. The sequence is that of Arabinogalactan protein 21 from Arabidopsis thaliana (Mouse-ear cress).